Consider the following 145-residue polypeptide: Small ribosomal subunit protein uS9 (145 aa).

It belongs to the universal ribosomal protein uS9 family.

The protein resides in the cytoplasm. The sequence is that of Small ribosomal subunit protein uS9 (RPS16) from Gossypium hirsutum (Upland cotton).